A 276-amino-acid polypeptide reads, in one-letter code: Urease accessory protein UreD (276 aa).

The protein belongs to the UreD family. As to quaternary structure, ureD, UreF and UreG form a complex that acts as a GTP-hydrolysis-dependent molecular chaperone, activating the urease apoprotein by helping to assemble the nickel containing metallocenter of UreC. The UreE protein probably delivers the nickel.

It is found in the cytoplasm. Functionally, required for maturation of urease via the functional incorporation of the urease nickel metallocenter. The chain is Urease accessory protein UreD from Paracidovorax citrulli (strain AAC00-1) (Acidovorax citrulli).